The primary structure comprises 98 residues: uncharacterized protein (98 aa).

This is an uncharacterized protein from Human cytomegalovirus (strain AD169) (HHV-5).